The primary structure comprises 642 residues: ATP-dependent rRNA helicase spb4 (642 aa).

Residues 14 to 42 (WDGVTPALSEWVLDAVASMGFTRMTPVQA) carry the Q motif motif. The 206-residue stretch at 45–250 (IPLFMAHKDV…RVGLRNPVKV (206 aa)) folds into the Helicase ATP-binding domain. Residue 58–65 (AVTGSGKT) coordinates ATP. The DEAD box motif lies at 198–201 (DEAD). The region spanning 284-438 (AIKHILYSLE…TLTITDADAA (155 aa)) is the Helicase C-terminal domain. Residues 522–625 (AYKDKQREKR…RLLRRAAKDK (104 aa)) are a coiled coil. Basic and acidic residues-rich tracts occupy residues 527 to 536 (QREKRRKEQV) and 577 to 628 (AKQA…KESK). Positions 527-642 (QREKRRKEQV…DDDDEFKGFD (116 aa)) are disordered. Residues 632–642 (GDDDDEFKGFD) are compositionally biased toward acidic residues.

It belongs to the DEAD box helicase family. DDX55/SPB4 subfamily. As to quaternary structure, component of pre-60S ribosomal complexes.

The protein localises to the nucleus. The protein resides in the nucleolus. It carries out the reaction ATP + H2O = ADP + phosphate + H(+). Functionally, ATP-binding RNA helicase involved in the biogenesis of 60S ribosomal subunits. Binds 90S pre-ribosomal particles and dissociates from pre-60S ribosomal particles after processing of 27SB pre-rRNA. Required for the normal formation of 18S rRNA through the processing of pre-rRNAs at sites A0, A1 and A2, and the normal formation of 25S and 5.8S rRNAs through the processing of pre-rRNAs at sites C1 and C2. In Aspergillus niger (strain ATCC MYA-4892 / CBS 513.88 / FGSC A1513), this protein is ATP-dependent rRNA helicase spb4.